The following is a 223-amino-acid chain: Small ribosomal subunit protein uS3 (223 aa).

The region spanning 39 to 107 (VREFLKQKLK…PVQVSVEEIR (69 aa)) is the KH type-2 domain.

This sequence belongs to the universal ribosomal protein uS3 family. Part of the 30S ribosomal subunit. Forms a tight complex with proteins S10 and S14.

Functionally, binds the lower part of the 30S subunit head. Binds mRNA in the 70S ribosome, positioning it for translation. This chain is Small ribosomal subunit protein uS3, found in Methylococcus capsulatus (strain ATCC 33009 / NCIMB 11132 / Bath).